Consider the following 20-residue polypeptide: Cytosol aminopeptidase (20 aa).

At Ser-6 the chain carries Phosphoserine.

The protein belongs to the peptidase M17 family. Homohexamer. Zn(2+) is required as a cofactor. Mn(2+) serves as cofactor.

It localises to the cytoplasm. It catalyses the reaction Release of an N-terminal amino acid, Xaa-|-Yaa-, in which Xaa is preferably Leu, but may be other amino acids including Pro although not Arg or Lys, and Yaa may be Pro. Amino acid amides and methyl esters are also readily hydrolyzed, but rates on arylamides are exceedingly low.. The catalysed reaction is an S-substituted L-cysteinylglycine + H2O = an S-substituted L-cysteine + glycine. The enzyme catalyses L-cysteinylglycine + H2O = L-cysteine + glycine. It carries out the reaction S-benzyl-L-cysteinylglycine + H2O = S-benzyl-L-cysteine + glycine. It catalyses the reaction Release of N-terminal proline from a peptide.. Cytosolic metallopeptidase that catalyzes the removal of unsubstituted N-terminal hydrophobic amino acids from various peptides. The presence of Zn(2+) ions is essential for the peptidase activity, and the association with other cofactors can modulate the substrate spectificity of the enzyme. For instance, in the presence of Mn(2+), it displays a specific Cys-Gly hydrolyzing activity of Cys-Gly-S-conjugates. Involved in the metabolism of glutathione and in the degradation of glutathione S-conjugates, which may play a role in the control of the cell redox status. The polypeptide is Cytosol aminopeptidase (Mesocricetus auratus (Golden hamster)).